Here is a 540-residue protein sequence, read N- to C-terminus: Chaperonin GroEL (540 aa).

Residues 29 to 32 (TLGP), 86 to 90 (DGTTT), G413, 476 to 478 (NAA), and D492 each bind ATP.

This sequence belongs to the chaperonin (HSP60) family. In terms of assembly, forms a cylinder of 14 subunits composed of two heptameric rings stacked back-to-back. Interacts with the co-chaperonin GroES.

It localises to the cytoplasm. The catalysed reaction is ATP + H2O + a folded polypeptide = ADP + phosphate + an unfolded polypeptide.. Its function is as follows. Together with its co-chaperonin GroES, plays an essential role in assisting protein folding. The GroEL-GroES system forms a nano-cage that allows encapsulation of the non-native substrate proteins and provides a physical environment optimized to promote and accelerate protein folding. This is Chaperonin GroEL from Streptococcus constellatus.